Consider the following 102-residue polypeptide: MYAIIETGGKQIKVEAGQEIYVEKLAGEVGDVVTFDKVLFVGGDSAKVGVPFVDGATVTAKVEKQGRAKKLTVYKYKPKKNYHKKQGHRQPYTKLTIDAINA.

Belongs to the bacterial ribosomal protein bL21 family. Part of the 50S ribosomal subunit. Contacts protein L20.

This protein binds to 23S rRNA in the presence of protein L20. The protein is Large ribosomal subunit protein bL21 of Listeria innocua serovar 6a (strain ATCC BAA-680 / CLIP 11262).